The chain runs to 101 residues: Urease subunit beta (101 aa).

The protein belongs to the urease beta subunit family. As to quaternary structure, heterotrimer of UreA (gamma), UreB (beta) and UreC (alpha) subunits. Three heterotrimers associate to form the active enzyme.

The protein localises to the cytoplasm. The enzyme catalyses urea + 2 H2O + H(+) = hydrogencarbonate + 2 NH4(+). It participates in nitrogen metabolism; urea degradation; CO(2) and NH(3) from urea (urease route): step 1/1. The protein is Urease subunit beta of Jannaschia sp. (strain CCS1).